The chain runs to 165 residues: Large ribosomal subunit protein uL10 (165 aa).

Belongs to the universal ribosomal protein uL10 family. Part of the ribosomal stalk of the 50S ribosomal subunit. The N-terminus interacts with L11 and the large rRNA to form the base of the stalk. The C-terminus forms an elongated spine to which L12 dimers bind in a sequential fashion forming a multimeric L10(L12)X complex.

Its function is as follows. Forms part of the ribosomal stalk, playing a central role in the interaction of the ribosome with GTP-bound translation factors. This Shewanella pealeana (strain ATCC 700345 / ANG-SQ1) protein is Large ribosomal subunit protein uL10.